We begin with the raw amino-acid sequence, 185 residues long: Testis development-related protein (185 aa).

Disordered stretches follow at residues 1-29 (MWKL…PPAA) and 121-156 (ADPE…ANSS).

The protein belongs to the TDRP family. Interacts with PRM2. Expressed in spermatogenic cells, especially in spermatocytes (at protein level).

It localises to the nucleus. The protein localises to the cytoplasm. Its function is as follows. Contributes to normal sperm motility, but not essential for male fertility. The sequence is that of Testis development-related protein (TDRP) from Homo sapiens (Human).